The sequence spans 408 residues: Heparan-sulfate 6-O-sulfotransferase 1 (408 aa).

Topologically, residues 8 to 14 (MVERTSK) are cytoplasmic. The chain crosses the membrane as a helical; Signal-anchor for type II membrane protein span at residues 15–35 (FLLIVAASVCFMLILYQYVGP). At 36–408 (GLSLGAPSGR…DYMSHIIEKW (373 aa)) the chain is on the lumenal side. 90–98 (HIQKTGGTT) lines the 3'-phosphoadenylyl sulfate pocket. Residues 120 to 121 (KK), Arg-137, Trp-142, and His-147 contribute to the substrate site. His-147 (proton acceptor) is an active-site residue. 3'-phosphoadenylyl sulfate-binding residues include Arg-182 and Ser-190. His-194 and Trp-201 together coordinate substrate. The N-linked (GlcNAc...) asparagine glycan is linked to Asn-261. 314–316 (MQY) contacts 3'-phosphoadenylyl sulfate. Asn-317 carries an N-linked (GlcNAc...) asparagine glycan. 320–321 (RA) is a binding site for 3'-phosphoadenylyl sulfate. N-linked (GlcNAc...) asparagine glycosylation occurs at Asn-328. Residues 348–382 (AKDLFQQRYQYKRQLERMEQRIKNREERLLHRSNE) are a coiled coil. The interval 376–396 (LLHRSNEALPKEETEEQGRLP) is disordered.

It belongs to the sulfotransferase 6 family. In terms of processing, N-glycosylated.

It localises to the membrane. The enzyme catalyses alpha-D-glucosaminyl-[heparan sulfate](n) + 3'-phosphoadenylyl sulfate = 6-sulfo-alpha-D-glucosaminyl-[heparan sulfate](n) + adenosine 3',5'-bisphosphate + H(+). Functionally, 6-O-sulfation enzyme which catalyzes the transfer of sulfate from 3'-phosphoadenosine 5'-phosphosulfate (PAPS) to position 6 of the N-sulfoglucosamine residue (GlcNS) of heparan sulfate. May also play a role in limb development. The chain is Heparan-sulfate 6-O-sulfotransferase 1 from Gallus gallus (Chicken).